The primary structure comprises 328 residues: Ketol-acid reductoisomerase (NADP(+)) (328 aa).

A KARI N-terminal Rossmann domain is found at 2–181 (AKIYRETDAD…GFTRVGVIET (180 aa)). Residues 25-28 (YGIQ), Arg48, Ser52, and 82-85 (DMVQ) contribute to the NADP(+) site. His107 is an active-site residue. Residue Gly133 coordinates NADP(+). One can recognise a KARI C-terminal knotted domain in the interval 182–327 (TFAEETETDL…EDLRRLMRSG (146 aa)). Asp190, Glu194, Glu226, and Glu230 together coordinate Mg(2+). Ser251 lines the substrate pocket.

It belongs to the ketol-acid reductoisomerase family. Mg(2+) is required as a cofactor.

It catalyses the reaction (2R)-2,3-dihydroxy-3-methylbutanoate + NADP(+) = (2S)-2-acetolactate + NADPH + H(+). The enzyme catalyses (2R,3R)-2,3-dihydroxy-3-methylpentanoate + NADP(+) = (S)-2-ethyl-2-hydroxy-3-oxobutanoate + NADPH + H(+). The protein operates within amino-acid biosynthesis; L-isoleucine biosynthesis; L-isoleucine from 2-oxobutanoate: step 2/4. Its pathway is amino-acid biosynthesis; L-valine biosynthesis; L-valine from pyruvate: step 2/4. Involved in the biosynthesis of branched-chain amino acids (BCAA). Catalyzes an alkyl-migration followed by a ketol-acid reduction of (S)-2-acetolactate (S2AL) to yield (R)-2,3-dihydroxy-isovalerate. In the isomerase reaction, S2AL is rearranged via a Mg-dependent methyl migration to produce 3-hydroxy-3-methyl-2-ketobutyrate (HMKB). In the reductase reaction, this 2-ketoacid undergoes a metal-dependent reduction by NADPH to yield (R)-2,3-dihydroxy-isovalerate. The protein is Ketol-acid reductoisomerase (NADP(+)) of Caldivirga maquilingensis (strain ATCC 700844 / DSM 13496 / JCM 10307 / IC-167).